A 592-amino-acid chain; its full sequence is Alpha-1,3-galactosidase B (592 aa).

The N-terminal stretch at 1–14 is a signal peptide; the sequence is MKLLSVLSLSLVLS. Residue cysteine 15 is the site of N-palmitoyl cysteine attachment. Cysteine 15 carries the S-diacylglycerol cysteine lipid modification. PbH1 repeat units follow at residues 429-451, 452-474, and 485-538; these read TPEVLFSGNVIRNNRARGSLFST, PRKTIVENNLFDHTSGAAILLCG, and CRHV…VIED.

Belongs to the glycosyl hydrolase 110 family. B subfamily.

The protein resides in the cell membrane. The enzyme catalyses Hydrolysis of terminal, non-reducing branched (1-&gt;3)-alpha-D-galactosidic residues, producing free D-galactose.. It carries out the reaction Hydrolysis of terminal, non-reducing linear (1-&gt;3)-alpha-D-galactosidic residues, producing free D-galactose.. It catalyses the reaction Hydrolysis of terminal, non-reducing alpha-D-galactose residues in alpha-D-galactosides, including galactose oligosaccharides, galactomannans and galactolipids.. Its function is as follows. Alpha-galactosidase. Removes both branched alpha-1,3-linked galactose residues of blood group B antigens and linear alpha-1,3-linked galactose structures. The polypeptide is Alpha-1,3-galactosidase B (glaB1) (Phocaeicola vulgatus (strain ATCC 8482 / DSM 1447 / JCM 5826 / CCUG 4940 / NBRC 14291 / NCTC 11154) (Bacteroides vulgatus)).